The sequence spans 258 residues: Trypsin (258 aa).

A signal peptide spans 1–16; sequence MIRFTLALAVIGVTFA. A propeptide spans 17 to 29 (activation peptide); sequence ASTPQIETNPNLE. The 228-residue stretch at 30–257 folds into the Peptidase S1 domain; that stretch reads IIGGHDANII…FRDWINEETE (228 aa). Cys55 and Cys71 are joined by a disulfide. The Charge relay system role is filled by His70. Asn110 carries N-linked (GlcNAc...) asparagine glycosylation. The active-site Charge relay system is the Asp117. Residues Asn130 and Asn188 are each glycosylated (N-linked (GlcNAc...) asparagine). 2 disulfides stabilise this stretch: Cys182–Cys197 and Cys209–Cys233. Ser213 serves as the catalytic Charge relay system.

The protein belongs to the peptidase S1 family. Expressed in larval carcasses and gut, and adult gut.

It is found in the secreted. The enzyme catalyses Preferential cleavage: Arg-|-Xaa, Lys-|-Xaa.. The chain is Trypsin from Phaedon cochleariae (Mustard beetle).